The following is a 146-amino-acid chain: Hemoglobin subunit beta (146 aa).

The residue at position 1 (Val1) is an N-acetylvaline. In terms of domain architecture, Globin spans 2–146 (HLTADEKAAV…VATALAHKYH (145 aa)). Residue Ser44 is modified to Phosphoserine. The residue at position 59 (Lys59) is an N6-acetyllysine. Position 63 (His63) interacts with heme b. Lys82 carries the N6-acetyllysine modification. A heme b-binding site is contributed by His92. S-nitrosocysteine is present on Cys93. Lys144 carries the post-translational modification N6-acetyllysine.

Belongs to the globin family. In terms of assembly, heterotetramer of two alpha chains and two beta chains. Red blood cells.

Involved in oxygen transport from the lung to the various peripheral tissues. The protein is Hemoglobin subunit beta (HBB) of Myotis velifer (Mouse-eared bat).